Here is a 227-residue protein sequence, read N- to C-terminus: Transmembrane emp24 domain-containing protein 1 (227 aa).

A signal peptide spans 1 to 23 (MMAAGAALALALWLLMPPVGVGG). The Extracellular portion of the chain corresponds to 24 to 194 (AGPPPIQDGE…LQEGNLERVN (171 aa)). The 83-residue stretch at 43-125 (KQCFYQSAPA…EKLVFFELIF (83 aa)) folds into the GOLD domain. Residues 145–170 (EMLDVKMEDIKESIETMRTRLERSIQ) adopt a coiled-coil conformation. The chain crosses the membrane as a helical span at residues 195 to 215 (FWSAVNVAVLLLVAVLQVCTL). Over 216 to 227 (KRFFQDKRPVPT) the chain is Cytoplasmic. The COPII vesicle coat-binding motif lies at 218–219 (FF). Residues 218–227 (FFQDKRPVPT) carry the COPI vesicle coat-binding motif.

Belongs to the EMP24/GP25L family. As to quaternary structure, homodimer in endoplasmic reticulum, endoplasmic reticulum-Golgi intermediate compartment and cis-Golgi network. Interacts with IL1RL1. Interacts with RNF26; this interaction is important to modulate innate immune signaling through the cGAS-STING pathway.

It is found in the cell membrane. Its subcellular location is the endoplasmic reticulum membrane. The protein localises to the golgi apparatus. It localises to the cis-Golgi network membrane. The protein resides in the endoplasmic reticulum-Golgi intermediate compartment membrane. Functionally, potential role in vesicular protein trafficking, mainly in the early secretory pathway. May act as a cargo receptor at the lumenal side for incorporation of secretory cargo molecules into transport vesicles and may be involved in vesicle coat formation at the cytoplasmic side. Plays a positive role in IL-33-mediated IL-8 and IL-6 production by interacting with interleukin-33 receptor IL1RL1. Plays also a role in the modulation of innate immune signaling through the cGAS-STING pathway by interacting with RNF26. The protein is Transmembrane emp24 domain-containing protein 1 (TMED1) of Pongo abelii (Sumatran orangutan).